We begin with the raw amino-acid sequence, 204 residues long: Nucleoside triphosphate pyrophosphatase (204 aa).

Aspartate 79 functions as the Proton acceptor in the catalytic mechanism.

This sequence belongs to the Maf family. Requires a divalent metal cation as cofactor.

It localises to the cytoplasm. It catalyses the reaction a ribonucleoside 5'-triphosphate + H2O = a ribonucleoside 5'-phosphate + diphosphate + H(+). The catalysed reaction is a 2'-deoxyribonucleoside 5'-triphosphate + H2O = a 2'-deoxyribonucleoside 5'-phosphate + diphosphate + H(+). In terms of biological role, nucleoside triphosphate pyrophosphatase. May have a dual role in cell division arrest and in preventing the incorporation of modified nucleotides into cellular nucleic acids. This is Nucleoside triphosphate pyrophosphatase from Trichodesmium erythraeum (strain IMS101).